A 632-amino-acid polypeptide reads, in one-letter code: Galactan 5-O-arabinofuranosyltransferase (632 aa).

Transmembrane regions (helical) follow at residues 10 to 30, 45 to 65, 76 to 96, 162 to 182, 184 to 204, 206 to 226, 242 to 259, 263 to 282, 298 to 318, 344 to 364, 375 to 395, 409 to 429, and 434 to 454; these read QIVL…IAIA, ALTT…GGVW, LGGL…PLGA, WAIT…WQMI, FEYA…YSSP, PYAA…WSGL, GWAT…AATW, LLAY…ATAL, LAGI…PFLA, FPML…LWLI, ALMI…LTTL, LTVL…QSLA, and AVLS…SQDI. Over 455–632 the chain is Extracellular; that stretch reads PNVLRPDLTI…LAIRKPMGNA (178 aa).

Belongs to the glycosyltransferase 85 family.

The protein localises to the cell membrane. The catalysed reaction is Adds an alpha-D-arabinofuranosyl group from trans,octacis-decaprenylphospho-beta-D-arabinofuranose at the 5-O-position of the eighth, tenth and twelfth galactofuranose unit of the galactofuranan chain of [beta-D-galactofuranosyl-(1-&gt;5)-beta-D-galactofuranosyl-(1-&gt;6)]14-beta-D-galactofuranosyl-(1-&gt;5)-beta-D-galactofuranosyl-(1-&gt;4)-alpha-L-rhamnopyranosyl-(1-&gt;3)-N-acetyl-alpha-D-glucosaminyl-diphospho-trans,octacis-decaprenol.. It participates in cell wall biogenesis; cell wall polysaccharide biosynthesis. Involved in the biosynthesis of the arabinogalactan (AG) region of the mycolylarabinogalactan-peptidoglycan (mAGP) complex, an essential component of the mycobacterial cell wall. Catalyzes the addition of the first key arabinofuranosyl (Araf) residue from the sugar donor decaprenyl-phospho-arabinose (DPA) on the C-5 of a 6-linked galactofuranosyl (Galf) of the galactan domain, thus 'priming' the galactan for further elaboration by other arabinofuranosyltransferases. The protein is Galactan 5-O-arabinofuranosyltransferase of Mycobacterium leprae (strain TN).